The chain runs to 418 residues: Elongation factor 1-gamma 1 (418 aa).

Residues 1–82 (MALVLHTFDG…YVTRSKSDNP (82 aa)) form the GST N-terminal domain. Residues 87-213 (SLIEYAHIEQ…GDVKQADSVP (127 aa)) form the GST C-terminal domain. Positions 211-265 (SVPQVQKKAAAPKEQKPKEAKKEAPKEAPKPKAAEKPEEEEEAPKPKPKNPLDLL) are disordered. Positions 221 to 246 (APKEQKPKEAKKEAPKEAPKPKAAEK) are enriched in basic and acidic residues. Residues 258–418 (PKNPLDLLPP…EALLDAKCFK (161 aa)) form the EF-1-gamma C-terminal domain.

As to quaternary structure, EF-1 is composed of four subunits: alpha, beta, delta, and gamma.

Its function is as follows. Probably plays a role in anchoring the complex to other cellular components. This chain is Elongation factor 1-gamma 1, found in Oryza sativa subsp. japonica (Rice).